Here is a 332-residue protein sequence, read N- to C-terminus: Glycerol-3-phosphate dehydrogenase [NAD(P)+] (332 aa).

The NADPH site is built by Trp-11, Arg-30, and Lys-108. 3 residues coordinate sn-glycerol 3-phosphate: Lys-108, Gly-137, and Ser-139. Ala-141 provides a ligand contact to NADPH. Positions 192, 245, 255, 256, and 257 each coordinate sn-glycerol 3-phosphate. Lys-192 serves as the catalytic Proton acceptor. Arg-256 is a binding site for NADPH. Val-280 and Glu-282 together coordinate NADPH.

The protein belongs to the NAD-dependent glycerol-3-phosphate dehydrogenase family.

The protein localises to the cytoplasm. The catalysed reaction is sn-glycerol 3-phosphate + NAD(+) = dihydroxyacetone phosphate + NADH + H(+). It catalyses the reaction sn-glycerol 3-phosphate + NADP(+) = dihydroxyacetone phosphate + NADPH + H(+). It participates in membrane lipid metabolism; glycerophospholipid metabolism. Its function is as follows. Catalyzes the reduction of the glycolytic intermediate dihydroxyacetone phosphate (DHAP) to sn-glycerol 3-phosphate (G3P), the key precursor for phospholipid synthesis. This chain is Glycerol-3-phosphate dehydrogenase [NAD(P)+], found in Burkholderia pseudomallei (strain 1710b).